The primary structure comprises 164 residues: UPF0303 protein Smed_2872 (164 aa).

The protein belongs to the UPF0303 family.

The sequence is that of UPF0303 protein Smed_2872 from Sinorhizobium medicae (strain WSM419) (Ensifer medicae).